A 63-amino-acid chain; its full sequence is Large ribosomal subunit protein bL32c (63 aa).

Residues 39–63 (SFSSGNEHPKPKGFSGQQTNNKIFE) form a disordered region. Residues 53–63 (SGQQTNNKIFE) are compositionally biased toward polar residues.

It belongs to the bacterial ribosomal protein bL32 family.

The protein localises to the plastid. It is found in the chloroplast. The protein is Large ribosomal subunit protein bL32c of Triticum aestivum (Wheat).